Consider the following 619-residue polypeptide: Chaperone protein HscA homolog (619 aa).

Belongs to the heat shock protein 70 family.

In terms of biological role, chaperone involved in the maturation of iron-sulfur cluster-containing proteins. Has a low intrinsic ATPase activity which is markedly stimulated by HscB. This Pseudomonas paraeruginosa (strain DSM 24068 / PA7) (Pseudomonas aeruginosa (strain PA7)) protein is Chaperone protein HscA homolog.